A 315-amino-acid polypeptide reads, in one-letter code: Glutamyl-Q tRNA(Asp) synthetase (315 aa).

L-glutamate contacts are provided by residues 21-25 (RFAPS) and Glu-63. The 'HIGH' region signature appears at 24-34 (PSPSGLLHFGS). Residues Cys-119, Cys-121, Tyr-133, and Cys-137 each coordinate Zn(2+). 2 residues coordinate L-glutamate: Tyr-190 and Arg-208. Residues 251–255 (KLSKQ) carry the 'KMSKS' region motif. Lys-254 lines the ATP pocket.

The protein belongs to the class-I aminoacyl-tRNA synthetase family. GluQ subfamily. It depends on Zn(2+) as a cofactor.

Its function is as follows. Catalyzes the tRNA-independent activation of glutamate in presence of ATP and the subsequent transfer of glutamate onto a tRNA(Asp). Glutamate is transferred on the 2-amino-5-(4,5-dihydroxy-2-cyclopenten-1-yl) moiety of the queuosine in the wobble position of the QUC anticodon. The polypeptide is Glutamyl-Q tRNA(Asp) synthetase (Colwellia psychrerythraea (strain 34H / ATCC BAA-681) (Vibrio psychroerythus)).